A 451-amino-acid chain; its full sequence is Threonylcarbamoyladenosine tRNA methylthiotransferase MtaB (451 aa).

An MTTase N-terminal domain is found at 2-114 (ATVAFHTLGC…MLGYIDQYRE (113 aa)). [4Fe-4S] cluster contacts are provided by C11, C47, C78, C153, C157, and C160. The region spanning 139–369 (FTDRTRASLK…IALSDQLAKE (231 aa)) is the Radical SAM core domain. One can recognise a TRAM domain in the interval 372-437 (SQYENEVLEI…YPYNEGQFVR (66 aa)).

Belongs to the methylthiotransferase family. MtaB subfamily. The cofactor is [4Fe-4S] cluster.

The protein resides in the cytoplasm. It carries out the reaction N(6)-L-threonylcarbamoyladenosine(37) in tRNA + (sulfur carrier)-SH + AH2 + 2 S-adenosyl-L-methionine = 2-methylsulfanyl-N(6)-L-threonylcarbamoyladenosine(37) in tRNA + (sulfur carrier)-H + 5'-deoxyadenosine + L-methionine + A + S-adenosyl-L-homocysteine + 2 H(+). Functionally, catalyzes the methylthiolation of N6-threonylcarbamoyladenosine (t(6)A), leading to the formation of 2-methylthio-N6-threonylcarbamoyladenosine (ms(2)t(6)A) at position 37 in tRNAs that read codons beginning with adenine. This chain is Threonylcarbamoyladenosine tRNA methylthiotransferase MtaB (mtaB), found in Bacillus subtilis (strain 168).